A 91-amino-acid chain; its full sequence is Insertion element IS1 7 protein InsA (91 aa).

Belongs to the IS1 elements InsA family.

Its function is as follows. Absolutely required for transposition of IS1. This Escherichia coli (strain K12) protein is Insertion element IS1 7 protein InsA (insA7).